We begin with the raw amino-acid sequence, 235 residues long: Phosphoribosylaminoimidazole-succinocarboxamide synthase (235 aa).

The protein belongs to the SAICAR synthetase family.

It catalyses the reaction 5-amino-1-(5-phospho-D-ribosyl)imidazole-4-carboxylate + L-aspartate + ATP = (2S)-2-[5-amino-1-(5-phospho-beta-D-ribosyl)imidazole-4-carboxamido]succinate + ADP + phosphate + 2 H(+). Its pathway is purine metabolism; IMP biosynthesis via de novo pathway; 5-amino-1-(5-phospho-D-ribosyl)imidazole-4-carboxamide from 5-amino-1-(5-phospho-D-ribosyl)imidazole-4-carboxylate: step 1/2. This chain is Phosphoribosylaminoimidazole-succinocarboxamide synthase, found in Streptococcus agalactiae serotype Ia (strain ATCC 27591 / A909 / CDC SS700).